A 61-amino-acid polypeptide reads, in one-letter code: Small ribosomal subunit protein uS14 (61 aa).

Zn(2+) is bound by residues C24, C27, C40, and C43.

It belongs to the universal ribosomal protein uS14 family. Zinc-binding uS14 subfamily. Part of the 30S ribosomal subunit. Contacts proteins S3 and S10. It depends on Zn(2+) as a cofactor.

Its function is as follows. Binds 16S rRNA, required for the assembly of 30S particles and may also be responsible for determining the conformation of the 16S rRNA at the A site. In Thermoanaerobacter sp. (strain X514), this protein is Small ribosomal subunit protein uS14.